A 377-amino-acid polypeptide reads, in one-letter code: G-protein coupled receptor 54 (377 aa).

The Extracellular segment spans residues 1–49 (MYSSEELWNSTEQVWINGSGTNFSLGRHEDDEEEEGDKHPFFTDAWLVP). N-linked (GlcNAc...) asparagine glycosylation is found at Asn-9, Asn-17, and Asn-22. Residues 50–70 (LFFSLIMLVGLVGNSLVIYVI) form a helical membrane-spanning segment. Topologically, residues 71–91 (SKHRQMRTATNFYIANLAATD) are cytoplasmic. Residues 92–112 (IIFLVCCVPFTATLYPLPGWI) traverse the membrane as a helical segment. Residues 113-119 (FGNFMCK) are Extracellular-facing. A disulfide bond links Cys-118 and Cys-198. Residues 120–140 (FVAFLQQVTVQATCITLTAMS) form a helical membrane-spanning segment. Residues 141–160 (GDRCYVTVYPLKSLRHRTPK) lie on the Cytoplasmic side of the membrane. A helical transmembrane segment spans residues 161–181 (VAMIVSICIWIGSFVLSTPIL). Topologically, residues 182 to 209 (MYQRIEEGYWYGPRQYCMERFPSKTHER) are extracellular. The helical transmembrane segment at 210-230 (AFILYQFIAAYLLPVLTISFC) threads the bilayer. Residues 231–269 (YTLMVKRVGQPTVEPVDNNYQVNLLSERTISIRSKVSKM) lie on the Cytoplasmic side of the membrane. Residues 270–290 (VVVIVLLFAICWGPIQIFVLF) form a helical membrane-spanning segment. Residues 291–305 (QSFYPNYQPNYATYK) lie on the Extracellular side of the membrane. The chain crosses the membrane as a helical span at residues 306–328 (IKTWANCMSYANSSVNPIVYGFM). The Cytoplasmic segment spans residues 329 to 377 (GASFQKSFRKTFPFLFKHKVRDSSMASRTANAEIKFVAAEEGNNNNAVN).

The protein belongs to the G-protein coupled receptor 1 family. Expressed in a significantly high percentage (45-60%) of mature GnRH1, GnRH2, and GnRH3 neurons and in immature GnRH3 neurons, which had migrated to the vicinity of their final locations in the brain. Only 5% of immature GnRH1 and GnRH2 neurons have receptor transcripts.

It is found in the cell membrane. Receptor speculated to be essential for sexual development. May regulate gonadotropin-releasing hormone (GnRH) secretion. The receptor expression could be a 'stop signal' for GnRH1, GnRH2, and GnRH3 neuronal migration, leading to suppression of cell growth and modulation of GnRH secretion, which is important for normal sexual development. The chain is G-protein coupled receptor 54 (gpr54) from Oreochromis niloticus (Nile tilapia).